The sequence spans 764 residues: 1,4-alpha-glucan branching enzyme GlgB (764 aa).

The tract at residues 1–46 (MSAARQPSPTVRDKAAPEPAAPAAPKGARAPRARRAAPPHGVRPAP) is disordered. Residues 17–28 (PEPAAPAAPKGA) show a composition bias toward low complexity. The Nucleophile role is filled by aspartate 440. The Proton donor role is filled by glutamate 493.

Belongs to the glycosyl hydrolase 13 family. GlgB subfamily. In terms of assembly, monomer.

It catalyses the reaction Transfers a segment of a (1-&gt;4)-alpha-D-glucan chain to a primary hydroxy group in a similar glucan chain.. It functions in the pathway glycan biosynthesis; glycogen biosynthesis. Its function is as follows. Catalyzes the formation of the alpha-1,6-glucosidic linkages in glycogen by scission of a 1,4-alpha-linked oligosaccharide from growing alpha-1,4-glucan chains and the subsequent attachment of the oligosaccharide to the alpha-1,6 position. In Kitasatospora aureofaciens (Streptomyces aureofaciens), this protein is 1,4-alpha-glucan branching enzyme GlgB (glgB).